A 93-amino-acid chain; its full sequence is UPF0297 protein PEPE_1262 (93 aa).

This sequence belongs to the UPF0297 family.

The protein is UPF0297 protein PEPE_1262 of Pediococcus pentosaceus (strain ATCC 25745 / CCUG 21536 / LMG 10740 / 183-1w).